The chain runs to 216 residues: DNA-directed RNA polymerase subunit alpha (216 aa).

Belongs to the RNA polymerase alpha chain family. In plastids the minimal PEP RNA polymerase catalytic core is composed of four subunits: alpha, beta, beta', and beta''. When a (nuclear-encoded) sigma factor is associated with the core the holoenzyme is formed, which can initiate transcription.

It is found in the plastid. The protein resides in the chloroplast. It catalyses the reaction RNA(n) + a ribonucleoside 5'-triphosphate = RNA(n+1) + diphosphate. Its function is as follows. DNA-dependent RNA polymerase catalyzes the transcription of DNA into RNA using the four ribonucleoside triphosphates as substrates. This chain is DNA-directed RNA polymerase subunit alpha (rpoA), found in Euglena granulata.